We begin with the raw amino-acid sequence, 581 residues long: Proline--tRNA ligase (581 aa).

This sequence belongs to the class-II aminoacyl-tRNA synthetase family. ProS type 1 subfamily. In terms of assembly, homodimer.

It localises to the cytoplasm. It carries out the reaction tRNA(Pro) + L-proline + ATP = L-prolyl-tRNA(Pro) + AMP + diphosphate. Its function is as follows. Catalyzes the attachment of proline to tRNA(Pro) in a two-step reaction: proline is first activated by ATP to form Pro-AMP and then transferred to the acceptor end of tRNA(Pro). As ProRS can inadvertently accommodate and process non-cognate amino acids such as alanine and cysteine, to avoid such errors it has two additional distinct editing activities against alanine. One activity is designated as 'pretransfer' editing and involves the tRNA(Pro)-independent hydrolysis of activated Ala-AMP. The other activity is designated 'posttransfer' editing and involves deacylation of mischarged Ala-tRNA(Pro). The misacylated Cys-tRNA(Pro) is not edited by ProRS. This chain is Proline--tRNA ligase, found in Blochmanniella pennsylvanica (strain BPEN).